Reading from the N-terminus, the 196-residue chain is Recombination protein RecR (196 aa).

The C4-type zinc finger occupies 57-72 (CERCHTFTEGAVCETC). In terms of domain architecture, Toprim spans 80–175 (TRLCVVETPA…HVTRLARGVP (96 aa)).

The protein belongs to the RecR family.

May play a role in DNA repair. It seems to be involved in an RecBC-independent recombinational process of DNA repair. It may act with RecF and RecO. This is Recombination protein RecR from Acidovorax sp. (strain JS42).